Here is a 376-residue protein sequence, read N- to C-terminus: MYG1 exonuclease (376 aa).

The transit peptide at Met-1–Ile-47 directs the protein to the mitochondrion. Position 120 is a phosphoserine (Ser-120). N6-acetyllysine occurs at positions 267 and 273.

The protein belongs to the MYG1 family. In terms of tissue distribution, ubiquitously expressed, with highest levels in testis.

It localises to the nucleus. It is found in the nucleoplasm. The protein localises to the mitochondrion matrix. The protein resides in the nucleolus. Functionally, 3'-5' RNA exonuclease which cleaves in situ on specific transcripts in both nucleus and mitochondrion. Involved in regulating spatially segregated organellar RNA processing, acts as a coordinator of nucleo-mitochondrial crosstalk. In nucleolus, processes pre-ribosomal RNA involved in ribosome assembly and alters cytoplasmic translation. In mitochondrial matrix, processes 3'-termini of the mito-ribosomal and messenger RNAs and controls translation of mitochondrial proteins. This chain is MYG1 exonuclease, found in Homo sapiens (Human).